Consider the following 305-residue polypeptide: Aspartate carbamoyltransferase catalytic subunit (305 aa).

The carbamoyl phosphate site is built by Arg51 and Thr52. Lys79 contacts L-aspartate. Residues Arg101, His129, and Gln132 each contribute to the carbamoyl phosphate site. L-aspartate is bound by residues Arg165 and Arg220. Residues Gly258 and Pro259 each coordinate carbamoyl phosphate.

This sequence belongs to the aspartate/ornithine carbamoyltransferase superfamily. ATCase family. Heterododecamer (2C3:3R2) of six catalytic PyrB chains organized as two trimers (C3), and six regulatory PyrI chains organized as three dimers (R2).

The catalysed reaction is carbamoyl phosphate + L-aspartate = N-carbamoyl-L-aspartate + phosphate + H(+). It participates in pyrimidine metabolism; UMP biosynthesis via de novo pathway; (S)-dihydroorotate from bicarbonate: step 2/3. Catalyzes the condensation of carbamoyl phosphate and aspartate to form carbamoyl aspartate and inorganic phosphate, the committed step in the de novo pyrimidine nucleotide biosynthesis pathway. The sequence is that of Aspartate carbamoyltransferase catalytic subunit from Rubrobacter xylanophilus (strain DSM 9941 / JCM 11954 / NBRC 16129 / PRD-1).